A 176-amino-acid chain; its full sequence is ATP-dependent protease subunit HslV (176 aa).

Residue T6 is part of the active site. Residues S161, C164, and T167 each contribute to the Na(+) site.

It belongs to the peptidase T1B family. HslV subfamily. In terms of assembly, a double ring-shaped homohexamer of HslV is capped on each side by a ring-shaped HslU homohexamer. The assembly of the HslU/HslV complex is dependent on binding of ATP.

It localises to the cytoplasm. It catalyses the reaction ATP-dependent cleavage of peptide bonds with broad specificity.. With respect to regulation, allosterically activated by HslU binding. Its function is as follows. Protease subunit of a proteasome-like degradation complex believed to be a general protein degrading machinery. The polypeptide is ATP-dependent protease subunit HslV (Thermosipho melanesiensis (strain DSM 12029 / CIP 104789 / BI429)).